The following is a 466-amino-acid chain: Methylenetetrahydrofolate--tRNA-(uracil-5-)-methyltransferase TrmFO (466 aa).

Position 12–17 (12–17) interacts with FAD; it reads GAGLAG.

Belongs to the MnmG family. TrmFO subfamily. The cofactor is FAD.

The protein localises to the cytoplasm. It carries out the reaction uridine(54) in tRNA + (6R)-5,10-methylene-5,6,7,8-tetrahydrofolate + NADH + H(+) = 5-methyluridine(54) in tRNA + (6S)-5,6,7,8-tetrahydrofolate + NAD(+). The enzyme catalyses uridine(54) in tRNA + (6R)-5,10-methylene-5,6,7,8-tetrahydrofolate + NADPH + H(+) = 5-methyluridine(54) in tRNA + (6S)-5,6,7,8-tetrahydrofolate + NADP(+). Functionally, catalyzes the folate-dependent formation of 5-methyl-uridine at position 54 (M-5-U54) in all tRNAs. The polypeptide is Methylenetetrahydrofolate--tRNA-(uracil-5-)-methyltransferase TrmFO (Synechococcus elongatus (strain ATCC 33912 / PCC 7942 / FACHB-805) (Anacystis nidulans R2)).